The primary structure comprises 268 residues: Small ribosomal subunit protein uS3 (268 aa).

Positions 40-110 (IRNLFFINYR…KLDLTINEIG (71 aa)) constitute a KH type-2 domain.

This sequence belongs to the universal ribosomal protein uS3 family. In terms of assembly, part of the 30S ribosomal subunit. Forms a tight complex with proteins S10 and S14.

In terms of biological role, binds the lower part of the 30S subunit head. Binds mRNA in the 70S ribosome, positioning it for translation. In Mycoplasma genitalium (strain ATCC 33530 / DSM 19775 / NCTC 10195 / G37) (Mycoplasmoides genitalium), this protein is Small ribosomal subunit protein uS3.